The chain runs to 579 residues: CTP synthase (579 aa).

The amidoligase domain stretch occupies residues 1–281 (MPALRKHPQT…DAYVVRRLNL (281 aa)). A CTP-binding site is contributed by Ser23. Position 23 (Ser23) interacts with UTP. ATP is bound by residues 24–29 (SLGKGL) and Asp81. Residues Asp81 and Glu155 each coordinate Mg(2+). CTP-binding positions include 162 to 164 (DIE), 202 to 207 (KTKPTQ), and Lys238. Residues 202–207 (KTKPTQ) and Lys238 contribute to the UTP site. The region spanning 306 to 554 (RIALVGKYID…IGAALDYKAA (249 aa)) is the Glutamine amidotransferase type-1 domain. Gly369 lines the L-glutamine pocket. The active-site Nucleophile; for glutamine hydrolysis is the Cys396. L-glutamine contacts are provided by residues 397 to 400 (LGLQ), Glu419, and Arg480. Catalysis depends on residues His527 and Glu529.

This sequence belongs to the CTP synthase family. In terms of assembly, homotetramer.

It catalyses the reaction UTP + L-glutamine + ATP + H2O = CTP + L-glutamate + ADP + phosphate + 2 H(+). The catalysed reaction is L-glutamine + H2O = L-glutamate + NH4(+). The enzyme catalyses UTP + NH4(+) + ATP = CTP + ADP + phosphate + 2 H(+). The protein operates within pyrimidine metabolism; CTP biosynthesis via de novo pathway; CTP from UDP: step 2/2. Its activity is regulated as follows. Allosterically activated by GTP, when glutamine is the substrate; GTP has no effect on the reaction when ammonia is the substrate. The allosteric effector GTP functions by stabilizing the protein conformation that binds the tetrahedral intermediate(s) formed during glutamine hydrolysis. Inhibited by the product CTP, via allosteric rather than competitive inhibition. In terms of biological role, catalyzes the ATP-dependent amination of UTP to CTP with either L-glutamine or ammonia as the source of nitrogen. Regulates intracellular CTP levels through interactions with the four ribonucleotide triphosphates. This chain is CTP synthase, found in Mycobacterium sp. (strain KMS).